Consider the following 633-residue polypeptide: Basic helix-loop-helix ARNT-like protein 1 (633 aa).

The tract at residues 1 to 65 (MADQRMDISS…GMDTDKDDQH (65 aa)) is disordered. Serine 17 is subject to Phosphoserine; by GSK3-beta. Over residues 24-33 (ISSSLSTSGV) the composition is skewed to polar residues. Positions 36–41 (NRKRKG) match the Nuclear localization signal motif. One can recognise a bHLH domain in the interval 79-132 (NAREAHSQIEKRRRDKMNSFIDELASLVPTCNAMSRKLDKLTVLRMAVQHMKTL). The residue at position 85 (serine 85) is a Phosphoserine. Serine 97 is modified (phosphoserine; by CK2). Residues 149–159 (LSDDELKHLIL) carry the Nuclear export signal 1 motif. The region spanning 150–222 (SDDELKHLIL…EQLSSSDTAP (73 aa)) is the PAS 1 domain. Lysine 259 is covalently cross-linked (Glycyl lysine isopeptide (Lys-Gly) (interchain with G-Cter in SUMO2 and SUMO3)). Lysine 266 is covalently cross-linked (Glycyl lysine isopeptide (Lys-Gly) (interchain with G-Cter in SUMO)). In terms of domain architecture, PAS 2 spans 333-403 (PQPVNGEIRV…ECHRQVLQTR (71 aa)). The short motif at 368–376 (LAYLPQELL) is the Nuclear export signal 2 element. In terms of domain architecture, PAC spans 408–451 (TNCYKFKIKDGSFITLRSRWFSFMNPWTKEVEYIVSTNTVVSTS). Disordered stretches follow at residues 469–499 (SMDS…RAGA) and 518–578 (GSSP…DNSS). The span at 518–528 (GSSPSSCGSSP) shows a compositional bias: low complexity. Residue lysine 545 is modified to N6-acetyllysine. Positions 563-578 (GQIQDSSGYPYSDNSS) are enriched in polar residues.

In terms of assembly, component of the circadian clock oscillator which includes the CRY1/2 proteins, CLOCK or NPAS2, BMAL1 or BMAL2, CSNK1D and/or CSNK1E, TIMELESS and the PER1/2/3 proteins. Forms a heterodimer with CLOCK. The CLOCK-BMAL1 heterodimer is required for E-box-dependent transactivation, for CLOCK nuclear translocation and degradation, and, for phosphorylation of both CLOCK and BMAL1. Interacts with PER1, PER2, CRY1 and CRY2 and this interaction requires a translocation to the nucleus. Interaction of the CLOCK-BMAL1 heterodimer with PER or CRY inhibits transcription activation. Interacts with NPAS2. Ubiquitinated, leading to its proteasomal degradation. Deubiquitinated by USP9X. In terms of processing, O-glycosylated; contains O-GlcNAc. O-glycosylation by OGT prevents protein degradation by inhibiting ubiquitination. It also stabilizes the CLOCK-BMAL1 heterodimer thereby increasing CLOCK-BMAL1-mediated transcription of genes in the negative loop of the circadian clock such as PER1/2/3 and CRY1/2. Post-translationally, acetylated on Lys-545 by CLOCK during the repression phase of the circadian cycle. Acetylation facilitates recruitment of CRY1 protein and initiates the repression phase of the circadian cycle. Acetylated at Lys-545 by KAT5 during the activation phase of the cycle, leading to recruitment of the positive transcription elongation factor b (P-TEFb) and BRD4, followed by productive elongation of circadian transcripts. Deacetylated by SIRT1, which may result in decreased protein stability. Phosphorylated upon dimerization with CLOCK. Phosphorylation enhances the transcriptional activity, alters the subcellular localization and decreases the stability of the CLOCK-BMAL1 heterodimer by promoting its degradation. Phosphorylation shows circadian variations in the liver with a peak between CT10 to CT14. Phosphorylation at Ser-97 by CK2 is essential for its nuclear localization, its interaction with CLOCK and controls CLOCK nuclear entry. Dephosphorylation at Ser-85 is important for dimerization with CLOCK and transcriptional activity. In terms of processing, sumoylated on Lys-266 upon dimerization with CLOCK. Predominantly conjugated to poly-SUMO2/3 rather than SUMO1 and the level of these conjugates undergo rhythmic variation, peaking at CT9-CT12. Sumoylation localizes it exclusively to the PML body and promotes its ubiquitination in the PML body, ubiquitin-dependent proteasomal degradation and the transcriptional activity of the CLOCK-BMAL1 heterodimer. Post-translationally, undergoes lysosome-mediated degradation in a time-dependent manner in the liver. In terms of tissue distribution, expressed in pineal gland and retina.

It localises to the nucleus. Its subcellular location is the cytoplasm. It is found in the PML body. In terms of biological role, transcriptional activator which forms a core component of the circadian clock. The circadian clock, an internal time-keeping system, regulates various physiological processes through the generation of approximately 24 hour circadian rhythms in gene expression, which are translated into rhythms in metabolism and behavior. It is derived from the Latin roots 'circa' (about) and 'diem' (day) and acts as an important regulator of a wide array of physiological functions including metabolism, sleep, body temperature, blood pressure, endocrine, immune, cardiovascular, and renal function. Consists of two major components: the central clock, residing in the suprachiasmatic nucleus (SCN) of the brain, and the peripheral clocks that are present in nearly every tissue and organ system. Both the central and peripheral clocks can be reset by environmental cues, also known as Zeitgebers (German for 'timegivers'). The predominant Zeitgeber for the central clock is light, which is sensed by retina and signals directly to the SCN. The central clock entrains the peripheral clocks through neuronal and hormonal signals, body temperature and feeding-related cues, aligning all clocks with the external light/dark cycle. Circadian rhythms allow an organism to achieve temporal homeostasis with its environment at the molecular level by regulating gene expression to create a peak of protein expression once every 24 hours to control when a particular physiological process is most active with respect to the solar day. Transcription and translation of core clock components (CLOCK, NPAS2, BMAL1, BMAL2, PER1, PER2, PER3, CRY1 and CRY2) plays a critical role in rhythm generation, whereas delays imposed by post-translational modifications (PTMs) are important for determining the period (tau) of the rhythms (tau refers to the period of a rhythm and is the length, in time, of one complete cycle). A diurnal rhythm is synchronized with the day/night cycle, while the ultradian and infradian rhythms have a period shorter and longer than 24 hours, respectively. Disruptions in the circadian rhythms contribute to the pathology of cardiovascular diseases, cancer, metabolic syndromes and aging. A transcription/translation feedback loop (TTFL) forms the core of the molecular circadian clock mechanism. Transcription factors, CLOCK or NPAS2 and BMAL1 or BMAL2, form the positive limb of the feedback loop, act in the form of a heterodimer and activate the transcription of core clock genes and clock-controlled genes (involved in key metabolic processes), harboring E-box elements (5'-CACGTG-3') within their promoters. The core clock genes: PER1/2/3 and CRY1/2 which are transcriptional repressors form the negative limb of the feedback loop and interact with the CLOCK|NPAS2-BMAL1|BMAL2 heterodimer inhibiting its activity and thereby negatively regulating their own expression. This heterodimer also activates nuclear receptors NR1D1/2 and RORA/B/G, which form a second feedback loop and which activate and repress BMAL1 transcription, respectively. The preferred binding motif for the CLOCK-BMAL1 heterodimer is 5'-CACGTGA-3', which contains a flanking adenine nucleotide at the 3-prime end of the canonical 6-nucleotide E-box sequence. CLOCK specifically binds to the half-site 5'-CAC-3', while BMAL1 binds to the half-site 5'-GTGA-3'. Essential for the rhythmic interaction of CLOCK with ASS1 and plays a critical role in positively regulating CLOCK-mediated acetylation of ASS1. Plays a role in protecting against lethal sepsis by limiting the expression of immune checkpoint protein CD274 in macrophages in a PKM2-dependent manner. This Gallus gallus (Chicken) protein is Basic helix-loop-helix ARNT-like protein 1 (BMAL1).